Reading from the N-terminus, the 183-residue chain is Pectinesterase inhibitor 8 (183 aa).

Positions 1-30 are cleaved as a signal peptide; sequence MAQRASRRPAAAAAAVVVAVVLAVSGGVGA. 2 disulfide bridges follow: C36–C51 and C107–C147.

This sequence belongs to the PMEI family.

It is found in the secreted. It localises to the extracellular space. The protein resides in the apoplast. In terms of biological role, pectin methylesterase (PME) inhibitor that inhibits PME in vitro. The polypeptide is Pectinesterase inhibitor 8 (Oryza sativa subsp. japonica (Rice)).